Here is a 477-residue protein sequence, read N- to C-terminus: Glycogen synthase (477 aa).

K15 is an ADP-alpha-D-glucose binding site.

This sequence belongs to the glycosyltransferase 1 family. Bacterial/plant glycogen synthase subfamily.

The enzyme catalyses [(1-&gt;4)-alpha-D-glucosyl](n) + ADP-alpha-D-glucose = [(1-&gt;4)-alpha-D-glucosyl](n+1) + ADP + H(+). It functions in the pathway glycan biosynthesis; glycogen biosynthesis. Its function is as follows. Synthesizes alpha-1,4-glucan chains using ADP-glucose. This Shigella dysenteriae serotype 1 (strain Sd197) protein is Glycogen synthase.